Reading from the N-terminus, the 462-residue chain is UDP-N-acetylmuramoylalanine--D-glutamate ligase (462 aa).

Residue 117–123 participates in ATP binding; the sequence is GTNGKTT.

Belongs to the MurCDEF family.

It is found in the cytoplasm. The enzyme catalyses UDP-N-acetyl-alpha-D-muramoyl-L-alanine + D-glutamate + ATP = UDP-N-acetyl-alpha-D-muramoyl-L-alanyl-D-glutamate + ADP + phosphate + H(+). The protein operates within cell wall biogenesis; peptidoglycan biosynthesis. In terms of biological role, cell wall formation. Catalyzes the addition of glutamate to the nucleotide precursor UDP-N-acetylmuramoyl-L-alanine (UMA). The sequence is that of UDP-N-acetylmuramoylalanine--D-glutamate ligase from Synechococcus sp. (strain CC9902).